A 294-amino-acid chain; its full sequence is Diaminopimelate epimerase (294 aa).

Substrate-binding residues include Asn15, Gln47, and Asn67. Cys76 acts as the Proton donor in catalysis. Residues 77-78 (GN), Asn163, Asn197, and 215-216 (ER) contribute to the substrate site. Cys224 acts as the Proton acceptor in catalysis. 225–226 (GS) lines the substrate pocket.

This sequence belongs to the diaminopimelate epimerase family. Homodimer.

It is found in the cytoplasm. It carries out the reaction (2S,6S)-2,6-diaminopimelate = meso-2,6-diaminopimelate. Its pathway is amino-acid biosynthesis; L-lysine biosynthesis via DAP pathway; DL-2,6-diaminopimelate from LL-2,6-diaminopimelate: step 1/1. Functionally, catalyzes the stereoinversion of LL-2,6-diaminopimelate (L,L-DAP) to meso-diaminopimelate (meso-DAP), a precursor of L-lysine and an essential component of the bacterial peptidoglycan. The polypeptide is Diaminopimelate epimerase (Mesorhizobium japonicum (strain LMG 29417 / CECT 9101 / MAFF 303099) (Mesorhizobium loti (strain MAFF 303099))).